A 46-amino-acid chain; its full sequence is Bacteriocin acidocin 8912 (46 aa).

The propeptide occupies 1–20 (MISSHQKTLTDKELALISGG).

It is found in the secreted. In terms of biological role, has a bactericidal effect on sensitive cells but not a bacteriolytic effect. The sequence is that of Bacteriocin acidocin 8912 (acdT) from Lactobacillus acidophilus.